Consider the following 480-residue polypeptide: 3-isopropylmalate dehydratase large subunit (480 aa).

Positions 357, 417, and 420 each coordinate [4Fe-4S] cluster. Residues 431–441 (GQRCASTSNRN) show a composition bias toward polar residues. The segment at 431-454 (GQRCASTSNRNFEGRQGKGGRTHL) is disordered.

This sequence belongs to the aconitase/IPM isomerase family. LeuC type 1 subfamily. In terms of assembly, heterodimer of LeuC and LeuD. Requires [4Fe-4S] cluster as cofactor.

The catalysed reaction is (2R,3S)-3-isopropylmalate = (2S)-2-isopropylmalate. It participates in amino-acid biosynthesis; L-leucine biosynthesis; L-leucine from 3-methyl-2-oxobutanoate: step 2/4. Its function is as follows. Catalyzes the isomerization between 2-isopropylmalate and 3-isopropylmalate, via the formation of 2-isopropylmaleate. This chain is 3-isopropylmalate dehydratase large subunit, found in Mycobacteroides abscessus (strain ATCC 19977 / DSM 44196 / CCUG 20993 / CIP 104536 / JCM 13569 / NCTC 13031 / TMC 1543 / L948) (Mycobacterium abscessus).